Consider the following 317-residue polypeptide: Lysosomal-associated transmembrane protein 4B (317 aa).

Residues 25–73 (AFGAKGTDPAEARSSRGIEEAGPRAHGRAGREPERRRSRQQRRGGLQAR) are disordered. Positions 32–59 (DPAEARSSRGIEEAGPRAHGRAGREPER) are enriched in basic and acidic residues. Helical transmembrane passes span 117–137 (ILLG…LLSA), 163–183 (MCIA…ATYG), 191–211 (WIIP…LVAI), and 244–264 (CLVL…GYLI). Positions 205–221 (LNMLVAITVLIYPNSIQ) are required for NEDD4 interaction.

This sequence belongs to the LAPTM4/LAPTM5 transporter family. As to quaternary structure, homooligomer; upon reaching the lysosomes. Interacts with MCOLN1. Interacts with NEDD4; may play a role in the lysosomal sorting of LAPTM4B; enhances HGS association with NEDD4; mediates inhibition of EGFR degradation. Interacts with PIP5K1C; promotes SNX5 association with LAPTM4B; kinase activity of PIP5K1C is required; interaction is regulated by phosphatidylinositol 4,5-bisphosphate generated by PIP5K1C. Interacts with HGS; promotes HGS ubiquitination. Interacts with SNX5. Interacts with SLC3A2 and SLC7A5; recruits SLC3A2 and SLC7A5 to lysosomes to promote leucine uptake into these organelles and is required for mTORC1 activation. Interacts with LRRC32; decreases TGFB1 production in regulatory T cells. Interacts with BECN1; competes with EGFR for LAPTM4B binding; regulates EGFR activity. Interacts with EGFR; positively correlates with EGFR activation. Post-translationally, undergoes proteolytic cleavage following delivery to the lysosomes. Ubiquitinated by NEDD4.

Its subcellular location is the endomembrane system. It localises to the late endosome membrane. The protein resides in the cell membrane. It is found in the cell projection. The protein localises to the lysosome membrane. Its subcellular location is the endosome membrane. It localises to the endosome. The protein resides in the multivesicular body membrane. It is found in the multivesicular body lumen. Required for optimal lysosomal function. Blocks EGF-stimulated EGFR intraluminal sorting and degradation. Conversely by binding with the phosphatidylinositol 4,5-bisphosphate, regulates its PIP5K1C interaction, inhibits HGS ubiquitination and relieves LAPTM4B inhibition of EGFR degradation. Recruits SLC3A2 and SLC7A5 (the Leu transporter) to the lysosome, promoting entry of leucine and other essential amino acid (EAA) into the lysosome, stimulating activation of proton-transporting vacuolar (V)-ATPase protein pump (V-ATPase) and hence mTORC1 activation. Plays a role as negative regulator of TGFB1 production in regulatory T cells. Binds ceramide and facilitates its exit from late endosome in order to control cell death pathways. This Homo sapiens (Human) protein is Lysosomal-associated transmembrane protein 4B.